The chain runs to 544 residues: CTP synthase (544 aa).

The interval 1–267 (MSKFIFVTGG…GDLLVSRLHL (267 aa)) is amidoligase domain. Ser-13 provides a ligand contact to CTP. Ser-13 is a UTP binding site. 14-19 (SVGKGI) contacts ATP. Tyr-54 serves as a coordination point for L-glutamine. Asp-71 is a binding site for ATP. Mg(2+) contacts are provided by Asp-71 and Glu-141. Residues 148-150 (DIE), 188-193 (KTKPTQ), and Lys-224 contribute to the CTP site. Residues 188-193 (KTKPTQ) and Lys-224 contribute to the UTP site. A Glutamine amidotransferase type-1 domain is found at 299-534 (YVELKDAYYS…INAAKKVIRD (236 aa)). Gly-354 contacts L-glutamine. Cys-381 (nucleophile; for glutamine hydrolysis) is an active-site residue. Residues 382–385 (LGMQ), Glu-405, and Arg-462 each bind L-glutamine. Active-site residues include His-507 and Glu-509.

This sequence belongs to the CTP synthase family. Homotetramer.

The catalysed reaction is UTP + L-glutamine + ATP + H2O = CTP + L-glutamate + ADP + phosphate + 2 H(+). The enzyme catalyses L-glutamine + H2O = L-glutamate + NH4(+). It carries out the reaction UTP + NH4(+) + ATP = CTP + ADP + phosphate + 2 H(+). Its pathway is pyrimidine metabolism; CTP biosynthesis via de novo pathway; CTP from UDP: step 2/2. Allosterically activated by GTP, when glutamine is the substrate; GTP has no effect on the reaction when ammonia is the substrate. The allosteric effector GTP functions by stabilizing the protein conformation that binds the tetrahedral intermediate(s) formed during glutamine hydrolysis. Inhibited by the product CTP, via allosteric rather than competitive inhibition. Its function is as follows. Catalyzes the ATP-dependent amination of UTP to CTP with either L-glutamine or ammonia as the source of nitrogen. Regulates intracellular CTP levels through interactions with the four ribonucleotide triphosphates. In Dehalococcoides mccartyi (strain ATCC BAA-2100 / JCM 16839 / KCTC 5957 / BAV1), this protein is CTP synthase.